The chain runs to 238 residues: 1-(5-phosphoribosyl)-5-[(5-phosphoribosylamino)methylideneamino] imidazole-4-carboxamide isomerase (238 aa).

Catalysis depends on aspartate 8, which acts as the Proton acceptor. Aspartate 129 (proton donor) is an active-site residue.

It belongs to the HisA/HisF family.

The protein resides in the cytoplasm. It catalyses the reaction 1-(5-phospho-beta-D-ribosyl)-5-[(5-phospho-beta-D-ribosylamino)methylideneamino]imidazole-4-carboxamide = 5-[(5-phospho-1-deoxy-D-ribulos-1-ylimino)methylamino]-1-(5-phospho-beta-D-ribosyl)imidazole-4-carboxamide. It functions in the pathway amino-acid biosynthesis; L-histidine biosynthesis; L-histidine from 5-phospho-alpha-D-ribose 1-diphosphate: step 4/9. The protein is 1-(5-phosphoribosyl)-5-[(5-phosphoribosylamino)methylideneamino] imidazole-4-carboxamide isomerase of Jannaschia sp. (strain CCS1).